The primary structure comprises 245 residues: MKVDLNADLGEGCVHDRALLRLVSSANIACGFHAGDAQTMLQSVRWALESNVAIGAHPGFADRENFGRSPRHLPSETLYAQVVYQVGALKALAEGEGGKLVHVKPHGALYNQAAKDPALADAIALAVRAVDPALILVGLANSESIRAGERHGLTTRQEVFADRAYQSDGSLVARGQPGALVESDEQAIRQTLTMVQKGQVQSLSGEWVKVQADSICLHGDGPHALDFAHRLRQAFSLQGIDVSSS.

This sequence belongs to the LamB/PxpA family. In terms of assembly, forms a complex composed of PxpA, PxpB and PxpC.

It carries out the reaction 5-oxo-L-proline + ATP + 2 H2O = L-glutamate + ADP + phosphate + H(+). Catalyzes the cleavage of 5-oxoproline to form L-glutamate coupled to the hydrolysis of ATP to ADP and inorganic phosphate. This chain is 5-oxoprolinase subunit A, found in Erwinia tasmaniensis (strain DSM 17950 / CFBP 7177 / CIP 109463 / NCPPB 4357 / Et1/99).